We begin with the raw amino-acid sequence, 213 residues long: MQTSLNRALNGLRVSRETVEKLEHFASLFQKWARSINLVAPSTLDDLWRRHILDSIQLFQLSPAPKTWVDLGSGGGFPGVITAICLSETESGWVHLVESNNKKAAFLRVALRETAARGTVHPIRIEEAPAEIPTCDAISARALSDLSQLLEYCAPWMTVEASRTIAFFHKGRDYQLEIDKAVSRFQFDLVKHASVVEPDSVVLEVANLSRRTK.

S-adenosyl-L-methionine contacts are provided by residues Gly72, Phe77, 125 to 126 (IE), and Arg141.

The protein belongs to the methyltransferase superfamily. RNA methyltransferase RsmG family.

The protein localises to the cytoplasm. The catalysed reaction is guanosine(527) in 16S rRNA + S-adenosyl-L-methionine = N(7)-methylguanosine(527) in 16S rRNA + S-adenosyl-L-homocysteine. Its function is as follows. Specifically methylates the N7 position of guanine in position 527 of 16S rRNA. The chain is Ribosomal RNA small subunit methyltransferase G from Sinorhizobium medicae (strain WSM419) (Ensifer medicae).